Reading from the N-terminus, the 507-residue chain is Putative F-box/LRR-repeat protein At4g00320 (507 aa).

The F-box domain occupies 12-60 (RDGISGLPDAMICHILSFLPTKVAASTTVLAKRWKPLLAFMPNLDFDES). LRR repeat units follow at residues 135 to 163 (RGFG…KIQF), 187 to 212 (YVKM…LLMN), 214 to 240 (IWKE…KFSR), 317 to 348 (ILYL…TIRT), and 349 to 374 (GVHI…VFEG).

In Arabidopsis thaliana (Mouse-ear cress), this protein is Putative F-box/LRR-repeat protein At4g00320.